A 486-amino-acid polypeptide reads, in one-letter code: Ribulose bisphosphate carboxylase large chain (486 aa).

Substrate-binding residues include asparagine 125 and threonine 175. Catalysis depends on lysine 177, which acts as the Proton acceptor. Lysine 179 contributes to the substrate binding site. Mg(2+)-binding residues include lysine 203, aspartate 205, and glutamate 206. The residue at position 203 (lysine 203) is an N6-carboxylysine. Histidine 295 functions as the Proton acceptor in the catalytic mechanism. 3 residues coordinate substrate: arginine 296, histidine 328, and serine 380.

The protein belongs to the RuBisCO large chain family. Type I subfamily. Heterohexadecamer of 8 large chains and 8 small chains. Requires Mg(2+) as cofactor.

It catalyses the reaction 2 (2R)-3-phosphoglycerate + 2 H(+) = D-ribulose 1,5-bisphosphate + CO2 + H2O. The enzyme catalyses D-ribulose 1,5-bisphosphate + O2 = 2-phosphoglycolate + (2R)-3-phosphoglycerate + 2 H(+). In terms of biological role, ruBisCO catalyzes two reactions: the carboxylation of D-ribulose 1,5-bisphosphate, the primary event in carbon dioxide fixation, as well as the oxidative fragmentation of the pentose substrate. Both reactions occur simultaneously and in competition at the same active site. This chain is Ribulose bisphosphate carboxylase large chain, found in Bradyrhizobium diazoefficiens (strain JCM 10833 / BCRC 13528 / IAM 13628 / NBRC 14792 / USDA 110).